Consider the following 267-residue polypeptide: Trehalose 2-sulfotransferase (267 aa).

Alpha,alpha-trehalose is bound by residues glutamine 14, 33–39, proline 48, and tryptophan 53; that span reads EPQEFFQ. The active-site Proton acceptor is glutamate 36.

The protein belongs to the Stf0 sulfotransferase family. In terms of assembly, homodimer.

The enzyme catalyses alpha,alpha-trehalose + 3'-phosphoadenylyl sulfate = 2-O-sulfo-alpha,alpha-trehalose + adenosine 3',5'-bisphosphate + H(+). Its pathway is glycolipid metabolism. In terms of biological role, catalyzes the sulfuryl group transfer from 3'-phosphoadenosine-5'-phosphosulfate (PAPS) to trehalose, leading to trehalose-2-sulfate (T2S). The sulfation of trehalose is the first step in the biosynthesis of sulfolipid-1 (SL-1), a major cell wall glycolipid and the most abundant sulfated metabolite found in Mycobacterium tuberculosis, that is a potential virulence factor thought to mediate host-pathogen interactions. This chain is Trehalose 2-sulfotransferase, found in Mycobacterium tuberculosis (strain ATCC 35801 / TMC 107 / Erdman).